A 102-amino-acid chain; its full sequence is Large ribosomal subunit protein bL21 (102 aa).

This sequence belongs to the bacterial ribosomal protein bL21 family. As to quaternary structure, part of the 50S ribosomal subunit. Contacts protein L20.

This protein binds to 23S rRNA in the presence of protein L20. The protein is Large ribosomal subunit protein bL21 of Staphylococcus aureus.